An 834-amino-acid chain; its full sequence is Phenylalanine--tRNA ligase beta subunit (834 aa).

The tRNA-binding domain occupies 48-159 (GDIERPLVVG…GTAEPGTDAN (112 aa)). One can recognise a B5 domain in the interval 411 to 492 (PAPEPIRMDI…RLEGLEQIPS (82 aa)). The Mg(2+) site is built by aspartate 470, aspartate 476, glutamate 479, and glutamate 480. The FDX-ACB domain occupies 740 to 833 (SPFPAVLQDV…AADAVGAVLR (94 aa)).

This sequence belongs to the phenylalanyl-tRNA synthetase beta subunit family. Type 1 subfamily. In terms of assembly, tetramer of two alpha and two beta subunits. The cofactor is Mg(2+).

It is found in the cytoplasm. It carries out the reaction tRNA(Phe) + L-phenylalanine + ATP = L-phenylalanyl-tRNA(Phe) + AMP + diphosphate + H(+). The polypeptide is Phenylalanine--tRNA ligase beta subunit (Nocardia farcinica (strain IFM 10152)).